A 145-amino-acid polypeptide reads, in one-letter code: 3-dehydroquinate dehydratase (145 aa).

Tyr23 functions as the Proton acceptor in the catalytic mechanism. Residues Asn73, His79, and Asp86 each contribute to the substrate site. His99 functions as the Proton donor in the catalytic mechanism. Residues 100 to 101 (LS) and Arg110 each bind substrate.

It belongs to the type-II 3-dehydroquinase family. In terms of assembly, homododecamer.

The catalysed reaction is 3-dehydroquinate = 3-dehydroshikimate + H2O. It functions in the pathway metabolic intermediate biosynthesis; chorismate biosynthesis; chorismate from D-erythrose 4-phosphate and phosphoenolpyruvate: step 3/7. In terms of biological role, catalyzes a trans-dehydration via an enolate intermediate. This is 3-dehydroquinate dehydratase from Desulfitobacterium hafniense (strain Y51).